The chain runs to 126 residues: Aspartate 1-decarboxylase (126 aa).

The active-site Schiff-base intermediate with substrate; via pyruvic acid is the Ser-25. Pyruvic acid (Ser) is present on Ser-25. Thr-57 lines the substrate pocket. Residue Tyr-58 is the Proton donor of the active site. A substrate-binding site is contributed by 73–75 (GAA).

This sequence belongs to the PanD family. As to quaternary structure, heterooctamer of four alpha and four beta subunits. Pyruvate is required as a cofactor. In terms of processing, is synthesized initially as an inactive proenzyme, which is activated by self-cleavage at a specific serine bond to produce a beta-subunit with a hydroxyl group at its C-terminus and an alpha-subunit with a pyruvoyl group at its N-terminus.

It localises to the cytoplasm. It catalyses the reaction L-aspartate + H(+) = beta-alanine + CO2. Its pathway is cofactor biosynthesis; (R)-pantothenate biosynthesis; beta-alanine from L-aspartate: step 1/1. Functionally, catalyzes the pyruvoyl-dependent decarboxylation of aspartate to produce beta-alanine. This chain is Aspartate 1-decarboxylase, found in Psychromonas ingrahamii (strain DSM 17664 / CCUG 51855 / 37).